The primary structure comprises 531 residues: Putative cysteine ligase BshC (531 aa).

Residues 447–481 (KAQEKKQTKGLDNLEKRLLKAEKKMHSEKLKKIIE) adopt a coiled-coil conformation.

It belongs to the BshC family.

This chain is Putative cysteine ligase BshC, found in Flavobacterium psychrophilum (strain ATCC 49511 / DSM 21280 / CIP 103535 / JIP02/86).